Reading from the N-terminus, the 213-residue chain is Uridine kinase (213 aa).

13–20 (GASASGKS) is a binding site for ATP.

It belongs to the uridine kinase family.

Its subcellular location is the cytoplasm. The enzyme catalyses uridine + ATP = UMP + ADP + H(+). It catalyses the reaction cytidine + ATP = CMP + ADP + H(+). It participates in pyrimidine metabolism; CTP biosynthesis via salvage pathway; CTP from cytidine: step 1/3. The protein operates within pyrimidine metabolism; UMP biosynthesis via salvage pathway; UMP from uridine: step 1/1. The sequence is that of Uridine kinase from Haemophilus influenzae (strain PittEE).